The sequence spans 460 residues: MADNKLWGGRFAAKTAQSVEDYTESVSYDQNLYREDISGSQAHAKMLAEQGVLTAEEAEILVKGLDQVLEEIESGKFEWKKEMEDLHMNIESRLTEIVGPVGGKLHTGRSRNDQVATDFRLHVLRSLEAWKTALEKLIASFTAKADANREVLLPGYTHLQPAQPVSLAHHMLAYAWMFKRDHSRVVDCINRANVCPLGAAALAGTTYPLKPATSAKYLGMEDTFRNSLDAVSDRDFVMEAMFTGSLIMTHLSRICEELIIWANPCFGFIKLPDEFSTGSSIMPQKKNPDVCELMRGKTGRVYGDLFSLMTTCKGLPLAYNRDMQEDKEPFFDCDKTVHASVVIMADMMDAMGFNPANMESALKKGFLNATELADYLVGKGIPFREAHHITGSAVAKAEAESRGLEDMSLEELKTFSDKIEEDVFEVLSYEAAVRRRVSPGSTGPESVDSQIAELKAWLKK.

Belongs to the lyase 1 family. Argininosuccinate lyase subfamily.

It is found in the cytoplasm. The enzyme catalyses 2-(N(omega)-L-arginino)succinate = fumarate + L-arginine. Its pathway is amino-acid biosynthesis; L-arginine biosynthesis; L-arginine from L-ornithine and carbamoyl phosphate: step 3/3. The sequence is that of Argininosuccinate lyase from Maridesulfovibrio salexigens (strain ATCC 14822 / DSM 2638 / NCIMB 8403 / VKM B-1763) (Desulfovibrio salexigens).